Here is a 346-residue protein sequence, read N- to C-terminus: NADH-ubiquinone oxidoreductase chain 2 (346 aa).

11 helical membrane passes run 1–21 (MNPHATPVLVLSLALGTTITI), 25–45 (HWVLAWTGLEINTLAIIPLIS), 60–80 (FLTQAAASALVLFSSMTNAWA), 95–115 (CLLLTAAIAIKLGLVPFHFWF), 124–144 (LMTALLLSTLMKFPPLTLLLM), 149–169 (LNPALLTTMALASAALGGWMG), 178–195 (ILAFSSISHLGWIAIILV), 200–219 (LALLTFYLYTIMTSAVFMAL), 242–262 (ATLMLVLLSLAGLPPLTGFMP), 274–294 (EMTPAAMAIAMLSLLSLFFYL), and 326–346 (AILASLSILLLPLSPMIHAIV).

The protein belongs to the complex I subunit 2 family.

Its subcellular location is the mitochondrion inner membrane. It catalyses the reaction a ubiquinone + NADH + 5 H(+)(in) = a ubiquinol + NAD(+) + 4 H(+)(out). Functionally, core subunit of the mitochondrial membrane respiratory chain NADH dehydrogenase (Complex I) that is believed to belong to the minimal assembly required for catalysis. Complex I functions in the transfer of electrons from NADH to the respiratory chain. The immediate electron acceptor for the enzyme is believed to be ubiquinone. In Mareca americana (American wigeon), this protein is NADH-ubiquinone oxidoreductase chain 2 (MT-ND2).